The primary structure comprises 196 residues: ATP synthase subunit b (196 aa).

A helical membrane pass occupies residues 24-44; it reads PLSELLIGTLSFALLVAFFFW.

It belongs to the ATPase B chain family. In terms of assembly, F-type ATPases have 2 components, F(1) - the catalytic core - and F(0) - the membrane proton channel. F(1) has five subunits: alpha(3), beta(3), gamma(1), delta(1), epsilon(1). F(0) has three main subunits: a(1), b(2) and c(10-14). The alpha and beta chains form an alternating ring which encloses part of the gamma chain. F(1) is attached to F(0) by a central stalk formed by the gamma and epsilon chains, while a peripheral stalk is formed by the delta and b chains.

Its subcellular location is the cell membrane. Its function is as follows. F(1)F(0) ATP synthase produces ATP from ADP in the presence of a proton or sodium gradient. F-type ATPases consist of two structural domains, F(1) containing the extramembraneous catalytic core and F(0) containing the membrane proton channel, linked together by a central stalk and a peripheral stalk. During catalysis, ATP synthesis in the catalytic domain of F(1) is coupled via a rotary mechanism of the central stalk subunits to proton translocation. In terms of biological role, component of the F(0) channel, it forms part of the peripheral stalk, linking F(1) to F(0). This Frankia casuarinae (strain DSM 45818 / CECT 9043 / HFP020203 / CcI3) protein is ATP synthase subunit b.